A 456-amino-acid chain; its full sequence is tRNA modification GTPase MnmE (456 aa).

(6S)-5-formyl-5,6,7,8-tetrahydrofolate contacts are provided by R23, E80, and K122. Residues 218 to 380 (AKRIVIVGPP…LKKHLSNRQK (163 aa)) form the TrmE-type G domain. N228 serves as a coordination point for K(+). Residues 228 to 233 (NAGKSS), 247 to 253 (TDLPGTT), and 272 to 275 (DTAG) each bind GTP. A Mg(2+)-binding site is contributed by S232. T247, L249, and T252 together coordinate K(+). Residue T253 participates in Mg(2+) binding. K456 is a (6S)-5-formyl-5,6,7,8-tetrahydrofolate binding site.

This sequence belongs to the TRAFAC class TrmE-Era-EngA-EngB-Septin-like GTPase superfamily. TrmE GTPase family. Homodimer. Heterotetramer of two MnmE and two MnmG subunits. K(+) serves as cofactor.

It localises to the cytoplasm. Its function is as follows. Exhibits a very high intrinsic GTPase hydrolysis rate. Involved in the addition of a carboxymethylaminomethyl (cmnm) group at the wobble position (U34) of certain tRNAs, forming tRNA-cmnm(5)s(2)U34. The polypeptide is tRNA modification GTPase MnmE (Buchnera aphidicola subsp. Schizaphis graminum (strain Sg)).